A 79-amino-acid chain; its full sequence is Sec-independent protein translocase protein TatA (79 aa).

Residues Met1–Phe21 form a helical membrane-spanning segment. A disordered region spans residues Asp46–Ser79. Residues Lys66–Ser79 show a composition bias toward basic and acidic residues.

This sequence belongs to the TatA/E family. As to quaternary structure, the Tat system comprises two distinct complexes: a TatABC complex, containing multiple copies of TatA, TatB and TatC subunits, and a separate TatA complex, containing only TatA subunits. Substrates initially bind to the TatABC complex, which probably triggers association of the separate TatA complex to form the active translocon.

Its subcellular location is the cell inner membrane. Its function is as follows. Part of the twin-arginine translocation (Tat) system that transports large folded proteins containing a characteristic twin-arginine motif in their signal peptide across membranes. TatA could form the protein-conducting channel of the Tat system. The polypeptide is Sec-independent protein translocase protein TatA (Helicobacter pylori (strain HPAG1)).